Consider the following 429-residue polypeptide: Glucose-6-phosphate exchanger SLC37A4 (429 aa).

Transmembrane regions (helical) follow at residues 84-104 (LLLVGLVNIFFAWSSTVPVFA), 105-125 (ALWFLNGLAQGLGWPPCGKVL), 139-159 (AILSTSMNLAGGLGPILATIL), 167-187 (STLALSGALCVVVSFLCLLLI), 219-239 (ELLLSPYLWVLSTGYLVVFGV), 260-280 (LVGSSYMSALEVGGLVGSIAA), 302-322 (GLLLFMMAGMTVSMYLFRVTV), 329-349 (LWILVLGAVFGFSSYGPIALF), 368-388 (IVGLMANVGGFLAGLPFSTIA), and 394-414 (STAFWVAEVICAASTAAFFLL).

This sequence belongs to the major facilitator superfamily. Organophosphate:Pi antiporter (OPA) (TC 2.A.1.4) family. As to expression, mostly expressed in liver and kidney.

The protein localises to the endoplasmic reticulum membrane. It carries out the reaction D-glucose 6-phosphate(in) + phosphate(out) = D-glucose 6-phosphate(out) + phosphate(in). Its activity is regulated as follows. Inhibited by vanadate and chlorogenic acid. Functionally, inorganic phosphate and glucose-6-phosphate antiporter of the endoplasmic reticulum. Transports cytoplasmic glucose-6-phosphate into the lumen of the endoplasmic reticulum and translocates inorganic phosphate into the opposite direction. Forms with glucose-6-phosphatase the complex responsible for glucose production through glycogenolysis and gluconeogenesis. Hence, it plays a central role in homeostatic regulation of blood glucose levels. In Homo sapiens (Human), this protein is Glucose-6-phosphate exchanger SLC37A4.